Here is a 115-residue protein sequence, read N- to C-terminus: uncharacterized protein (115 aa).

The region spanning 1–115 is the MSP domain; that stretch reads MGVEISLDPP…ETVIKLSAAE (115 aa).

This is an uncharacterized protein from Caenorhabditis elegans.